Consider the following 447-residue polypeptide: Tubulin beta-5 chain (447 aa).

GTP-binding residues include Gln-11, Glu-69, Ser-138, Gly-142, Thr-143, Gly-144, Asn-204, and Asn-226. Glu-69 contributes to the Mg(2+) binding site. The interval 424-447 is disordered; it reads QYQDATAEEEGEFDEDEELDDAMG. A compositionally biased stretch (acidic residues) spans 429–447; sequence TAEEEGEFDEDEELDDAMG.

The protein belongs to the tubulin family. Dimer of alpha and beta chains. A typical microtubule is a hollow water-filled tube with an outer diameter of 25 nm and an inner diameter of 15 nM. Alpha-beta heterodimers associate head-to-tail to form protofilaments running lengthwise along the microtubule wall with the beta-tubulin subunit facing the microtubule plus end conferring a structural polarity. Microtubules usually have 13 protofilaments but different protofilament numbers can be found in some organisms and specialized cells. Mg(2+) is required as a cofactor.

The protein resides in the cytoplasm. It is found in the cytoskeleton. In terms of biological role, tubulin is the major constituent of microtubules, a cylinder consisting of laterally associated linear protofilaments composed of alpha- and beta-tubulin heterodimers. Microtubules grow by the addition of GTP-tubulin dimers to the microtubule end, where a stabilizing cap forms. Below the cap, tubulin dimers are in GDP-bound state, owing to GTPase activity of alpha-tubulin. This is Tubulin beta-5 chain (TUBB5) from Ectocarpus variabilis (Brown alga).